A 457-amino-acid chain; its full sequence is Cysteine--tRNA ligase (457 aa).

Residue cysteine 28 coordinates Zn(2+). Positions 30-40 (MTVYDYCHLGH) match the 'HIGH' region motif. Zn(2+) contacts are provided by cysteine 209, histidine 234, and glutamate 238. Positions 266-270 (KMSKS) match the 'KMSKS' region motif. Lysine 269 is a binding site for ATP.

Belongs to the class-I aminoacyl-tRNA synthetase family. As to quaternary structure, monomer. Zn(2+) serves as cofactor.

The protein resides in the cytoplasm. The catalysed reaction is tRNA(Cys) + L-cysteine + ATP = L-cysteinyl-tRNA(Cys) + AMP + diphosphate. The protein is Cysteine--tRNA ligase of Laribacter hongkongensis (strain HLHK9).